The sequence spans 1860 residues: Golgi-specific brefeldin A-resistance guanine nucleotide exchange factor 1 (1860 aa).

The DCB; DCB:DCB domain and DCB:HUS domain interaction stretch occupies residues 1–211; the sequence is MVDKNIYIIQ…EPKNYVGTNM (211 aa). Positions 1–381 are interaction with RAB1B; it reads MVDKNIYIIQ…SVHDMDYVNP (381 aa). Disordered stretches follow at residues 215–266 and 281–372; these read KMRA…GGMP and AASA…DSAS. Residues 227 to 241 are compositionally biased toward basic residues; sequence WKKQKRSPRPPRHMT. 3 stretches are compositionally biased toward polar residues: residues 250 to 262, 290 to 301, and 335 to 351; these read PTPN…SNLT, TDSGLEFSSQTT, and DLQQ…SASV. A phosphoserine mark is found at Ser350 and Ser353. At Thr508 the chain carries Phosphothreonine. The interval 531-551 is HUS; DCB:HUS domain interaction; that stretch reads RIPSFVTELYINYDCDYYCSN. Over residues 620 to 631 the composition is skewed to basic and acidic residues; that stretch reads TREASNTERTAS. Positions 620–666 are disordered; sequence TREASNTERTASDGKAVGMASDIPGLHLPGGGRLPPEHGKSGCSDLE. At Ser663 the chain carries Phosphoserine. The region spanning 693–883 is the SEC7 domain; it reads ELIEIKNKKK…EDMYHAIKNE (191 aa). A phosphatidylinositol-phosphate binding; required for translocation to the leading edge and for ARF1 activation upon GPCR signaling region spans residues 887-1371; the sequence is MPEEQTGLVR…PSRPGPSPLI (485 aa). Low complexity predominate over residues 1285–1297; that stretch reads QATARADAPDAGA. A disordered region spans residues 1285-1336; the sequence is QATARADAPDAGAQSDSELPSYHQNDVSLDRGYTSDSEVYTDHGRPGKIHRS. Positions 1298–1311 are enriched in polar residues; sequence QSDSELPSYHQNDV. At Ser1299 the chain carries Phosphoserine. The residue at position 1317 (Tyr1317) is a Phosphotyrosine. Phosphoserine is present on residues Ser1319, Ser1321, and Ser1336. Thr1338 is subject to Phosphothreonine; by AMPK. 3 disordered regions span residues 1351–1371, 1431–1484, and 1726–1809; these read GKDD…SPLI, CKSQ…DEGV, and PMPM…QPPL. A compositionally biased stretch (basic and acidic residues) spans 1433–1447; sequence SQEKRGKSHKYDSKG. Over residues 1465 to 1474 the composition is skewed to polar residues; the sequence is TSSQHASRGG. Residues Ser1476, Ser1774, and Ser1785 each carry the phosphoserine modification. Residues 1775-1792 show a composition bias toward low complexity; that stretch reads PRAASSSSPGSPVASSPS.

In terms of assembly, can form homodimers and probably homotetramers. Interacts with COPG1; the interaction is independent of ARF1 activation. Interacts with ARF1, ARF3, ARF4 and ARF5. Interacts with RAB1B (GTP-bound form); required for GBF1 membrane association. Interacts with GGA1, GGA2 and GGA3. Interacts with USO1. Interacts (via SEC7 domain) with PNPLA2 (via C-terminus); the interaction is direct. Interacts with ARMH3. (Microbial infection) Interacts with poliovirus protein 3A. In terms of processing, AMPK-mediated phosphorylation at Thr-1338 is induced by 2-deoxyglucose (2-DG) and AICA ribonucleotide, and occurs during mitosis leading to membrane disassociation and inactivation of ARF1 during mitosis. In terms of tissue distribution, ubiquitous.

It localises to the golgi apparatus. Its subcellular location is the cis-Golgi network. The protein localises to the endoplasmic reticulum-Golgi intermediate compartment. The protein resides in the trans-Golgi network. It is found in the cytoplasm. It localises to the lipid droplet. Its subcellular location is the membrane. Inhibited by brefeldin A (BFA). Inhibited by golgicide A (GCA). In terms of biological role, guanine-nucleotide exchange factor (GEF) for members of the Arf family of small GTPases involved in trafficking in the early secretory pathway; its GEF activity initiates the coating of nascent vesicles via the localized generation of activated ARFs through replacement of GDP with GTP. Recruitment to cis-Golgi membranes requires membrane association of Arf-GDP and can be regulated by ARF1, ARF3, ARF4 and ARF5. Involved in the recruitment of the COPI coat complex to the endoplasmic reticulum exit sites (ERES), and the endoplasmic reticulum-Golgi intermediate (ERGIC) and cis-Golgi compartments which implicates ARF1 activation. Involved in COPI vesicle-dependent retrograde transport from the ERGIC and cis-Golgi compartments to the endoplasmic reticulum (ER). Involved in the trans-Golgi network recruitment of GGA1, GGA2, GGA3, BIG1, BIG2, and the AP-1 adaptor protein complex related to chlathrin-dependent transport; the function requires its GEF activity (probably at least in part on ARF4 and ARF5). Has GEF activity towards ARF1. Has in vitro GEF activity towards ARF5. Involved in the processing of PSAP. Required for the assembly of the Golgi apparatus. The AMPK-phosphorylated form is involved in Golgi disassembly during mitotis and under stress conditions. May be involved in the COPI vesicle-dependent recruitment of PNPLA2 to lipid droplets; however, this function is under debate. In neutrophils, involved in G protein-coupled receptor (GPCR)-mediated chemotaxis und superoxide production. Proposed to be recruited by phosphatidylinositol-phosphates generated upon GPCR stimulation to the leading edge where it recruits and activates ARF1, and is involved in recruitment of GIT2 and the NADPH oxidase complex. Plays a role in maintaining mitochondrial morphology. In Homo sapiens (Human), this protein is Golgi-specific brefeldin A-resistance guanine nucleotide exchange factor 1 (GBF1).